Consider the following 319-residue polypeptide: 33 kDa chaperonin (319 aa).

Residues Met1–Leu10 show a composition bias toward basic and acidic residues. The interval Met1–Pro25 is disordered. Cystine bridges form between Cys261/Cys263 and Cys294/Cys297.

This sequence belongs to the HSP33 family. In terms of processing, under oxidizing conditions two disulfide bonds are formed involving the reactive cysteines. Under reducing conditions zinc is bound to the reactive cysteines and the protein is inactive.

It is found in the cytoplasm. In terms of biological role, redox regulated molecular chaperone. Protects both thermally unfolding and oxidatively damaged proteins from irreversible aggregation. Plays an important role in the bacterial defense system toward oxidative stress. The polypeptide is 33 kDa chaperonin (Synechococcus sp. (strain JA-2-3B'a(2-13)) (Cyanobacteria bacterium Yellowstone B-Prime)).